The chain runs to 216 residues: Probable GTP-binding protein EngB (216 aa).

In terms of domain architecture, EngB-type G spans 23–197 (EGAEIAFAGR…EHKVAGWLGL (175 aa)). Residues 31–38 (GRSNAGKS), 58–62 (GRTQL), 76–79 (DLPG), 143–146 (TKCD), and 176–178 (FSS) contribute to the GTP site. Positions 38 and 60 each coordinate Mg(2+).

It belongs to the TRAFAC class TrmE-Era-EngA-EngB-Septin-like GTPase superfamily. EngB GTPase family. Mg(2+) serves as cofactor.

Necessary for normal cell division and for the maintenance of normal septation. The protein is Probable GTP-binding protein EngB of Aromatoleum aromaticum (strain DSM 19018 / LMG 30748 / EbN1) (Azoarcus sp. (strain EbN1)).